Consider the following 249-residue polypeptide: Type III pantothenate kinase (249 aa).

6 to 13 (DCGNSFIK) is a binding site for ATP. Substrate-binding positions include Tyr-93 and 100–103 (GMDR). Asp-102 serves as the catalytic Proton acceptor. A K(+)-binding site is contributed by Asp-122. Thr-125 contacts ATP. Thr-181 serves as a coordination point for substrate.

Belongs to the type III pantothenate kinase family. Homodimer. The cofactor is NH4(+). K(+) is required as a cofactor.

It localises to the cytoplasm. The enzyme catalyses (R)-pantothenate + ATP = (R)-4'-phosphopantothenate + ADP + H(+). Its pathway is cofactor biosynthesis; coenzyme A biosynthesis; CoA from (R)-pantothenate: step 1/5. In terms of biological role, catalyzes the phosphorylation of pantothenate (Pan), the first step in CoA biosynthesis. This chain is Type III pantothenate kinase, found in Pseudomonas putida (strain W619).